Consider the following 673-residue polypeptide: Sodium/myo-inositol cotransporter 2 (673 aa).

The Extracellular segment spans residues 1-27; it reads MESTTSSPQPPPSDALEAFPQKSMEPA. Residues 28 to 48 form a helical membrane-spanning segment; sequence DIVVLVLYFLFVLAVGLWSTV. The Cytoplasmic segment spans residues 49–56; sequence RTKRDTVK. The helical transmembrane segment at 57 to 77 threads the bilayer; that stretch reads GYFLAGGDMVWWPVGASLFAS. N78 is a topological domain (extracellular). Residues 79 to 99 traverse the membrane as a helical segment; sequence VGSGHFIGLAGSGAAVGISVA. Topologically, residues 100–102 are cytoplasmic; that stretch reads AYE. A helical transmembrane segment spans residues 103 to 123; sequence LNGLFSVLMLAWIFLPIYIAG. Residues 124-180 lie on the Extracellular side of the membrane; sequence QVTTMPEYLKRRFGGSRIPITLASIYPSTHSLTILQVDMYAGAIFIQQSLHLDLYLA. Residues 181–201 traverse the membrane as a helical segment; the sequence is IVGLLAVTALYTVAGGLAAVI. Over 202–208 the chain is Cytoplasmic; sequence YTDALQT. The chain crosses the membrane as a helical span at residues 209–229; that stretch reads VIMLIGAFILMGYSFAAVGGM. At 230–272 the chain is on the extracellular side; that stretch reads EGLKDQYFLALASNRSENSSCGLPREDAFHIFRDPLTSDLPWP. Residues 273-293 traverse the membrane as a helical segment; sequence GILFGMSIPSLWYWCTDQVIV. Topologically, residues 294-308 are cytoplasmic; the sequence is QRSLAAKNLSHAKGG. The helical transmembrane segment at 309–329 threads the bilayer; the sequence is SLMAAYLKVLPLFLMVFPGMV. Over 330–375 the chain is Extracellular; that stretch reads SRILFPDQVACAHPDICQRVCSNPSGCSDIAYPKLVLELLPTGLRG. The helical transmembrane segment at 376-396 threads the bilayer; it reads LMMAVMVAALMSSLTSIFNSA. Residues 397–418 lie on the Cytoplasmic side of the membrane; that stretch reads STIFTMDLWHHIRPRASERELM. The helical transmembrane segment at 419 to 439 threads the bilayer; sequence IVGRVFVLALVLVSILWIPVV. Over 440–446 the chain is Extracellular; that stretch reads QASQGGQ. The helical transmembrane segment at 447–467 threads the bilayer; sequence LFIYIQSISSYLQPPVAVVFI. At 468 to 479 the chain is on the cytoplasmic side; the sequence is MGCFWKRTNEKG. A helical transmembrane segment spans residues 480 to 500; that stretch reads AFSGLILGLLLGLVRLILDFV. Over 501–521 the chain is Extracellular; the sequence is YVQPRCDQPDDRPAVVKDVHY. The helical transmembrane segment at 522–542 threads the bilayer; the sequence is LYFSMILSSTTLITVFTVSWF. Over 543 to 652 the chain is Cytoplasmic; that stretch reads TETPSKEMVS…SLEENPLVKT (110 aa). A helical membrane pass occupies residues 653–673; sequence LLDVNCIVCISCAIFLWGYFA.

It belongs to the sodium:solute symporter (SSF) (TC 2.A.21) family. Expressed in kidney and small intestine.

The protein localises to the membrane. It is found in the apical cell membrane. The catalysed reaction is myo-inositol(out) + 2 Na(+)(out) = myo-inositol(in) + 2 Na(+)(in). It catalyses the reaction 1D-chiro-inositol(out) + 2 Na(+)(out) = 1D-chiro-inositol(in) + 2 Na(+)(in). The enzyme catalyses D-glucose(out) + 2 Na(+)(out) = D-glucose(in) + 2 Na(+)(in). It carries out the reaction D-xylose(out) + 2 Na(+)(out) = D-xylose(in) + 2 Na(+)(in). MI transport activity inhibited by D-chiro-inositol (DCI), phlorizin (Pz) and sodium (Na(+)). Insulin increases D-chiro-inositol uptake. Involved in the sodium-dependent cotransport of myo-inositol (MI) with a Na(+):MI stoichiometry of 2:1. Exclusively responsible for apical MI transport and absorption in intestine. Can also transport D-chiro-inositol (DCI) but not L-fucose. Exhibits stereospecific cotransport of both D-glucose and D-xylose. May induce apoptosis through the TNF-alpha, PDCD1 pathway. May play a role in the regulation of MI concentration in serum, involving reabsorption in at least the proximal tubule of the kidney. The sequence is that of Sodium/myo-inositol cotransporter 2 from Rattus norvegicus (Rat).